The following is a 746-amino-acid chain: UvrABC system protein C (746 aa).

The 80-residue stretch at 18 to 97 (AKPGVYKWRD…IKEFDPRFNV (80 aa)) folds into the GIY-YIG domain. One can recognise a UVR domain in the interval 211–246 (RPYIAQLTRDMKEASAELEFEKAARLRDQIQMLETV). Residues 557-577 (ANGNDNGEGGSDISGKGHAVP) are disordered.

This sequence belongs to the UvrC family. In terms of assembly, interacts with UvrB in an incision complex.

It localises to the cytoplasm. In terms of biological role, the UvrABC repair system catalyzes the recognition and processing of DNA lesions. UvrC both incises the 5' and 3' sides of the lesion. The N-terminal half is responsible for the 3' incision and the C-terminal half is responsible for the 5' incision. The protein is UvrABC system protein C of Bifidobacterium longum (strain DJO10A).